The chain runs to 323 residues: NADH-ubiquinone oxidoreductase chain 1 (323 aa).

9 helical membrane-spanning segments follow: residues 10 to 30 (LLYI…GLLI), 52 to 72 (PNVV…KLVL), 84 to 104 (IIYA…WSVI), 119 to 139 (VIFI…AGWA), 157 to 177 (VSYE…AGTV), 189 to 209 (VWFI…ALAE), 245 to 265 (YANI…GIVS), 268 to 288 (ISGA…RATL), and 302 to 322 (KSLL…VLII).

This sequence belongs to the complex I subunit 1 family.

The protein resides in the mitochondrion inner membrane. It carries out the reaction a ubiquinone + NADH + 5 H(+)(in) = a ubiquinol + NAD(+) + 4 H(+)(out). Its function is as follows. Core subunit of the mitochondrial membrane respiratory chain NADH dehydrogenase (Complex I) that is believed to belong to the minimal assembly required for catalysis. Complex I functions in the transfer of electrons from NADH to the respiratory chain. The immediate electron acceptor for the enzyme is believed to be ubiquinone. This is NADH-ubiquinone oxidoreductase chain 1 (nad1) from Dictyostelium citrinum (Slime mold).